The following is a 304-amino-acid chain: Energy-coupling factor transporter ATP-binding protein EcfA2 (304 aa).

The 259-residue stretch at 3 to 261 (IIVKNISYIY…EKFLVENKLK (259 aa)) folds into the ABC transporter domain. An ATP-binding site is contributed by 40–47 (GSTGSGKT).

This sequence belongs to the ABC transporter superfamily. Energy-coupling factor EcfA family. In terms of assembly, forms a stable energy-coupling factor (ECF) transporter complex composed of 2 membrane-embedded substrate-binding proteins (S component), 2 ATP-binding proteins (A component) and 2 transmembrane proteins (T component).

Its subcellular location is the cell membrane. In terms of biological role, ATP-binding (A) component of a common energy-coupling factor (ECF) ABC-transporter complex. Unlike classic ABC transporters this ECF transporter provides the energy necessary to transport a number of different substrates. This Mycoplasmopsis pulmonis (strain UAB CTIP) (Mycoplasma pulmonis) protein is Energy-coupling factor transporter ATP-binding protein EcfA2.